A 264-amino-acid chain; its full sequence is MSDILQTILARKAEEVAQRRAQRPLEELQAAVASAPPVRGFVRALQAAVANGDPAVIAEVKKASPSKGVIRPDFRPADIAVSYEFGGASCLSVLTDVDFFQGADAYLQQAREACTLPVLRKDFVIDAYQVYEARVLGADCILLIVAALDDTQLATLSELALSLGMDVLVEVHDIDELERALQVPAPMIGINNRNLRTFEVSLQTTLDMQQAVPRDRLLVTESGILGLQDVALMRDAGIHAFLVGEAFMRVEEPGEGLRQLFFAA.

The protein belongs to the TrpC family.

The enzyme catalyses 1-(2-carboxyphenylamino)-1-deoxy-D-ribulose 5-phosphate + H(+) = (1S,2R)-1-C-(indol-3-yl)glycerol 3-phosphate + CO2 + H2O. It participates in amino-acid biosynthesis; L-tryptophan biosynthesis; L-tryptophan from chorismate: step 4/5. This Stenotrophomonas maltophilia (strain K279a) protein is Indole-3-glycerol phosphate synthase.